Consider the following 1481-residue polypeptide: Cystic fibrosis transmembrane conductance regulator (1481 aa).

The Cytoplasmic segment spans residues 1–77 (MQRSPLEKAS…KLINALRRCF (77 aa)). A helical membrane pass occupies residues 78-98 (FWRFMFYGIILYLGEVTKAVQ). The ABC transmembrane type-1 1 domain occupies 81-365 (FMFYGIILYL…WAVQTWYDSL (285 aa)). Residues 99 to 122 (PLLLGRIIASYDPDNKAERSIAIY) are Extracellular-facing. Residues 123–146 (LGIGLCLLFIVRTLLLHPAIFGLH) form a helical membrane-spanning segment. The Cytoplasmic portion of the chain corresponds to 147–195 (HIGMQMRIAMFSLIYKKTLKLSSRVLDKISIGQLVSLLSNNLNKFDEGL). The helical transmembrane segment at 196–216 (ALAHFVWIAPLQVTLLMGLLW) threads the bilayer. Residues 217–222 (ELLQAF) lie on the Extracellular side of the membrane. The chain crosses the membrane as a helical span at residues 223–243 (TFCGLAFLVVLAFLQAGLGKM). Residues 244–298 (MMKYRDQRAGKINERLVITSEIIENIQSVKAYCWEEAMEKIIENLRQTELKLTRK) are Cytoplasmic-facing. A helical transmembrane segment spans residues 299-319 (AAYVRYLNSSAFFFSGFFVVF). The Extracellular portion of the chain corresponds to 320 to 339 (LSVLPYALLKGIILRKIFTT). Residues 340–358 (ISFCIVLRMAVTRQFPWAV) form a helical membrane-spanning segment. The Cytoplasmic portion of the chain corresponds to 359–858 (QTWYDSLGAI…YLRYITVHKS (500 aa)). ATP is bound by residues tryptophan 401, 457–464 (GSTGAGKT), and glutamine 492. The 223-residue stretch at 423 to 645 (NGDNNLFFSN…RPDFSSKLMG (223 aa)) folds into the ABC transporter 1 domain. The S-palmitoyl cysteine moiety is linked to residue cysteine 523. 2 positions are modified to phosphoserine: serine 548 and serine 659. The tract at residues 653–831 (TAERRNSIIT…EEINEEDLRD (179 aa)) is disordered R region. Phosphoserine; by PKA is present on serine 669. Phosphoserine is present on serine 685. Lysine 687 participates in a covalent cross-link: Glycyl lysine isopeptide (Lys-Gly) (interchain with G-Cter in ubiquitin). Phosphoserine occurs at positions 699 and 711. At threonine 716 the chain carries Phosphothreonine. 5 positions are modified to phosphoserine: serine 736, serine 767, serine 790, serine 795, and serine 813. The chain crosses the membrane as a helical span at residues 859–879 (LMFVLIWCLVVFLAEVAASLV). Positions 859–1155 (LMFVLIWCLV…AVNSSIDVDS (297 aa)) constitute an ABC transmembrane type-1 2 domain. Topologically, residues 880-918 (VLCLFPKILFQDKGNSTKSANNSYAVIITSTSSYYIFYI) are extracellular. N-linked (GlcNAc...) asparagine glycans are attached at residues asparagine 894 and asparagine 900. Residues 919 to 939 (YVGVADTLLALGLFRGLPLVH) form a discontinuously helical membrane-spanning segment. The Cytoplasmic segment spans residues 940 to 990 (TLITVSKTLHHKMLQSVLQAPMSTLNTLKTGGILNRFSKDIAVLDDLLPLT). A helical membrane pass occupies residues 991-1011 (IFDFVQLLLIVIGAVVVVSVL). Residues 1012 to 1013 (QP) are Extracellular-facing. The helical transmembrane segment at 1014 to 1034 (YIFLATVPVIAAFILLRAYFL) threads the bilayer. The Cytoplasmic portion of the chain corresponds to 1035-1095 (HTSQQLKQLE…TANWFLYLST (61 aa)). Residues 1096–1116 (LRWFQMRIEMIFVIFFIAVTF) form a helical membrane-spanning segment. Residues 1117–1130 (ISILTTGEGEGRVG) lie on the Extracellular side of the membrane. Residues 1131–1151 (IILTLAMNIMGTLQWAVNSSI) form a helical membrane-spanning segment. The Cytoplasmic segment spans residues 1152-1481 (DVDSLMRSVS…TEEEVQETKI (330 aa)). The ABC transporter 2 domain maps to 1211–1444 (MTVKDLTAKY…KSLFRQAISP (234 aa)). ATP-binding positions include tyrosine 1220 and 1245–1252 (GRTGSGKS). An interaction with GORASP2 region spans residues 1387-1481 (RTLKQAFADC…TEEEVQETKI (95 aa)). Cysteine 1396 is lipidated: S-palmitoyl cysteine. A disordered region spans residues 1452 to 1481 (PQRNSSRQKSRSNIAALKEETEEEVQETKI). Residues 1453 to 1464 (QRNSSRQKSRSN) show a composition bias toward low complexity. The residue at position 1457 (serine 1457) is a Phosphoserine. Residues 1471–1481 (ETEEEVQETKI) are compositionally biased toward acidic residues. The PDZ-binding motif lies at 1479 to 1481 (TKI).

This sequence belongs to the ABC transporter superfamily. ABCC family. CFTR transporter (TC 3.A.1.202) subfamily. In terms of assembly, monomer; does not require oligomerization for channel activity. May form oligomers in the membrane. Interacts with SLC26A3, SLC26A6 and NHERF1. Interacts with SHANK2. Interacts with MYO6. Interacts (via C-terminus) with GOPC (via PDZ domain); this promotes CFTR internalization and thereby decreases channel activity. Interacts with SLC4A7 through NHERF1. Found in a complex with MYO5B and RAB11A. Interacts with ANO1. Interacts with SLC26A8. Interacts with AHCYL1; the interaction increases CFTR activity. Interacts with CSE1L. The core-glycosylated form interacts with GORASP2 (via PDZ GRASP-type 1 domain) in respone to ER stress. Interacts with MARCHF2; the interaction leads to CFTR ubiqtuitination and degradation. Interacts with ADGRG2. In terms of processing, N-glycosylated. Post-translationally, phosphorylated; cAMP treatment promotes phosphorylation and activates the channel. Dephosphorylation decreases the ATPase activity (in vitro). Phosphorylation at PKA sites activates the channel. Phosphorylation at PKC sites enhances the response to phosphorylation by PKA. Phosphorylated by AMPK; this inhibits channel activity. Ubiquitinated, leading to its degradation in the lysosome. Deubiquitination by USP10 in early endosomes enhances its endocytic recycling to the cell membrane. Ubiquitinated by RNF185 during ER stress. Ubiquitinated by MARCHF2.

The protein resides in the apical cell membrane. It is found in the early endosome membrane. The protein localises to the cell membrane. Its subcellular location is the recycling endosome membrane. It localises to the endoplasmic reticulum membrane. The protein resides in the nucleus. It catalyses the reaction ATP + H2O + closed Cl(-) channel = ADP + phosphate + open Cl(-) channel.. The enzyme catalyses chloride(in) = chloride(out). The catalysed reaction is hydrogencarbonate(in) = hydrogencarbonate(out). It carries out the reaction ATP + H2O = ADP + phosphate + H(+). Its function is as follows. Epithelial ion channel that plays an important role in the regulation of epithelial ion and water transport and fluid homeostasis. Mediates the transport of chloride ions across the cell membrane. Possesses an intrinsic ATPase activity and utilizes ATP to gate its channel; the passive flow of anions through the channel is gated by cycles of ATP binding and hydrolysis by the ATP-binding domains. The ion channel is also permeable to HCO(3)(-); selectivity depends on the extracellular chloride concentration. Exerts its function also by modulating the activity of other ion channels and transporters. Contributes to the regulation of the pH and the ion content of the epithelial fluid layer. Modulates the activity of the epithelial sodium channel (ENaC) complex, in part by regulating the cell surface expression of the ENaC complex. May regulate bicarbonate secretion and salvage in epithelial cells by regulating the transporter SLC4A7. Can inhibit the chloride channel activity of ANO1. Plays a role in the chloride and bicarbonate homeostasis during sperm epididymal maturation and capacitation. In Muntiacus reevesi (Reeves' muntjac), this protein is Cystic fibrosis transmembrane conductance regulator.